A 1153-amino-acid chain; its full sequence is Myosin-3 (1153 aa).

A Myosin N-terminal SH3-like domain is found at 104–153 (KKVLQFWVQLPNGNWELGKIMSTSGEESVIVVTEGKVLKVKSETLVPANP). In terms of domain architecture, Myosin motor spans 157 to 829 (DGVDDLMQLS…QIGVLEDTRN (673 aa)). Residues 248–255 (GESGAGKT) and 296–304 (NDNSSRFGK) contribute to the ATP site. Actin-binding regions lie at residues 581-615 (LFEK…KQHL) and 709-731 (LFQL…KPNN). 3 IQ domains span residues 831–860 (TLHG…GITI), 854–883 (LKTG…RHRA), and 903–932 (TVDA…LSSG). Positions 948 to 996 (YLSDLQRRVLRTEAALREKEEENDILRQRVQQYDNRWSEYETKMKSMEE) form a coiled coil. A disordered region spans residues 1020 to 1050 (DSARNSDASVNASDATDLDSGGSHYQMGHGR). A compositionally biased stretch (polar residues) spans 1024–1033 (NSDASVNASD).

This sequence belongs to the TRAFAC class myosin-kinesin ATPase superfamily. Myosin family. Plant myosin class VIII subfamily. Homodimer.

Functionally, myosin heavy chain that is required for the cell cycle-regulated transport of various organelles and proteins for their segregation. Functions by binding with its tail domain to receptor proteins on organelles and exerting force with its N-terminal motor domain against actin filaments, thereby transporting its cargo along polarized actin cables. In Arabidopsis thaliana (Mouse-ear cress), this protein is Myosin-3 (VIII-A).